The primary structure comprises 314 residues: PDZ domain-containing protein GIPC2 (314 aa).

The span at 1 to 12 shows a compositional bias: basic residues; that stretch reads MPLGLRGKKKAA. The tract at residues 1–36 is disordered; the sequence is MPLGLRGKKKAAKSKEAARLVEGERSSGSQGVPGPP. Positions 13–25 are enriched in basic and acidic residues; sequence KSKEAARLVEGER. The 81-residue stretch at 117–197 folds into the PDZ domain; the sequence is EVNVYKSEDS…EELFTLQLIE (81 aa).

It belongs to the GIPC family. In terms of assembly, probably interacts with SEMA5A. As to expression, expressed in kidney and lung (at protein level).

Its subcellular location is the cytoplasm. The sequence is that of PDZ domain-containing protein GIPC2 (Gipc2) from Mus musculus (Mouse).